A 249-amino-acid polypeptide reads, in one-letter code: tRNA (guanine-N(1)-)-methyltransferase (249 aa).

Residues Gly-118 and 138–143 (IGDYVL) each bind S-adenosyl-L-methionine.

The protein belongs to the RNA methyltransferase TrmD family. Homodimer.

The protein resides in the cytoplasm. The enzyme catalyses guanosine(37) in tRNA + S-adenosyl-L-methionine = N(1)-methylguanosine(37) in tRNA + S-adenosyl-L-homocysteine + H(+). In terms of biological role, specifically methylates guanosine-37 in various tRNAs. The chain is tRNA (guanine-N(1)-)-methyltransferase from Alkaliphilus oremlandii (strain OhILAs) (Clostridium oremlandii (strain OhILAs)).